Reading from the N-terminus, the 354-residue chain is Histidinol-phosphate aminotransferase (354 aa).

Lysine 208 carries the post-translational modification N6-(pyridoxal phosphate)lysine.

The protein belongs to the class-II pyridoxal-phosphate-dependent aminotransferase family. Histidinol-phosphate aminotransferase subfamily. In terms of assembly, homodimer. Pyridoxal 5'-phosphate serves as cofactor.

The enzyme catalyses L-histidinol phosphate + 2-oxoglutarate = 3-(imidazol-4-yl)-2-oxopropyl phosphate + L-glutamate. It functions in the pathway amino-acid biosynthesis; L-histidine biosynthesis; L-histidine from 5-phospho-alpha-D-ribose 1-diphosphate: step 7/9. This Aquifex aeolicus (strain VF5) protein is Histidinol-phosphate aminotransferase.